Here is a 475-residue protein sequence, read N- to C-terminus: MHRGDKPVNIEVAEPITVEVLDLDAQGIARLAPSEEEAAQDQSGKVIFIKGALPTELVTYTVTSDKSRFSKAKVREILKPAVFRAEPKCAAFGICGGCTMQHLDIRAQVAMKQRVLEDDLQHIAKVKSEEILCPMGGPTWEYRHRARLSAVNRSIKKGTVLIGFHEGKSGYVADMLACEILPKHVSDLLPEMRKLVMGLSIVDRMPQIEIAIGEPEDAQSDDPQKSKPVTALVFRNLKPLTTEDEQLLRAFADQHEVWIWLQPKGIETIAPFYPLTGKLCYRLPEFEIEMPFKPCDFTQVNHMMNRALVSRAIRLLEVQPTDRVLDLFCGIGNFTLPLARKAKQVLGIEGLESLTARAKSNAQHNGLSDKASFMQSDLFEVTSETVASWGGAERWLMDPPRKGAMDICKALAELHLQQSDLLPERIVYVSCNPKTLARDVEILCHQAGYRLSSAGIINMFPHTSHVESMVVFDRA.

In terms of domain architecture, TRAM spans methionine 1–glutamate 76. [4Fe-4S] cluster is bound by residues cysteine 89, cysteine 95, cysteine 98, and cysteine 178. Positions 299, 328, 333, 349, 377, and 398 each coordinate S-adenosyl-L-methionine. Cysteine 431 acts as the Nucleophile in catalysis.

It belongs to the class I-like SAM-binding methyltransferase superfamily. RNA M5U methyltransferase family. RlmD subfamily.

It carries out the reaction uridine(1939) in 23S rRNA + S-adenosyl-L-methionine = 5-methyluridine(1939) in 23S rRNA + S-adenosyl-L-homocysteine + H(+). In terms of biological role, catalyzes the formation of 5-methyl-uridine at position 1939 (m5U1939) in 23S rRNA. The protein is 23S rRNA (uracil(1939)-C(5))-methyltransferase RlmD of Polynucleobacter necessarius subsp. necessarius (strain STIR1).